Consider the following 193-residue polypeptide: Ion-translocating oxidoreductase complex subunit A (193 aa).

6 consecutive transmembrane segments (helical) span residues 5–25, 47–67, 72–92, 102–122, 134–154, and 171–191; these read LLLF…FLGL, FVMT…LIPL, LRTL…EMVV, LLGI…VALL, ALYG…FAAI, and AIAL…SGLV.

This sequence belongs to the NqrDE/RnfAE family. In terms of assembly, the complex is composed of six subunits: RnfA, RnfB, RnfC, RnfD, RnfE and RnfG.

It is found in the cell inner membrane. Its function is as follows. Part of a membrane-bound complex that couples electron transfer with translocation of ions across the membrane. The chain is Ion-translocating oxidoreductase complex subunit A from Citrobacter koseri (strain ATCC BAA-895 / CDC 4225-83 / SGSC4696).